The following is a 310-amino-acid chain: Ribosomal RNA small subunit methyltransferase H (310 aa).

Residues 32–34 (GGH), Asp-52, Phe-79, Asp-100, and Gln-107 each bind S-adenosyl-L-methionine.

This sequence belongs to the methyltransferase superfamily. RsmH family.

It localises to the cytoplasm. The enzyme catalyses cytidine(1402) in 16S rRNA + S-adenosyl-L-methionine = N(4)-methylcytidine(1402) in 16S rRNA + S-adenosyl-L-homocysteine + H(+). Functionally, specifically methylates the N4 position of cytidine in position 1402 (C1402) of 16S rRNA. This is Ribosomal RNA small subunit methyltransferase H from Bacillus cereus (strain ATCC 10987 / NRS 248).